The sequence spans 185 residues: Elongation factor P (185 aa).

It belongs to the elongation factor P family.

It is found in the cytoplasm. It functions in the pathway protein biosynthesis; polypeptide chain elongation. Involved in peptide bond synthesis. Stimulates efficient translation and peptide-bond synthesis on native or reconstituted 70S ribosomes in vitro. Probably functions indirectly by altering the affinity of the ribosome for aminoacyl-tRNA, thus increasing their reactivity as acceptors for peptidyl transferase. This chain is Elongation factor P, found in Alkaliphilus oremlandii (strain OhILAs) (Clostridium oremlandii (strain OhILAs)).